The following is a 194-amino-acid chain: Inosine triphosphate pyrophosphatase (194 aa).

Thr11–Lys16 is an ITP binding site. Glu39 contributes to the Mg(2+) binding site. ITP contacts are provided by residues Lys51, Asp67–Thr68, Lys84, Phe143–Asp146, Lys166, and His171–Arg172.

Belongs to the HAM1 NTPase family. In terms of assembly, homodimer. Mg(2+) is required as a cofactor. Mn(2+) serves as cofactor.

It is found in the cytoplasm. The catalysed reaction is ITP + H2O = IMP + diphosphate + H(+). It carries out the reaction dITP + H2O = dIMP + diphosphate + H(+). The enzyme catalyses XTP + H2O = XMP + diphosphate + H(+). In terms of biological role, pyrophosphatase that hydrolyzes non-canonical purine nucleotides such as inosine triphosphate (ITP), deoxyinosine triphosphate (dITP) or xanthosine 5'-triphosphate (XTP) to their respective monophosphate derivatives. The enzyme does not distinguish between the deoxy- and ribose forms. Probably excludes non-canonical purines from RNA and DNA precursor pools, thus preventing their incorporation into RNA and DNA and avoiding chromosomal lesions. The protein is Inosine triphosphate pyrophosphatase (itpa) of Dictyostelium discoideum (Social amoeba).